The chain runs to 851 residues: Alanine--tRNA ligase (851 aa).

Zn(2+)-binding residues include H554, H558, C656, and H660.

Belongs to the class-II aminoacyl-tRNA synthetase family. Zn(2+) is required as a cofactor.

Its subcellular location is the cytoplasm. It catalyses the reaction tRNA(Ala) + L-alanine + ATP = L-alanyl-tRNA(Ala) + AMP + diphosphate. Its function is as follows. Catalyzes the attachment of alanine to tRNA(Ala) in a two-step reaction: alanine is first activated by ATP to form Ala-AMP and then transferred to the acceptor end of tRNA(Ala). Also edits incorrectly charged Ser-tRNA(Ala) and Gly-tRNA(Ala) via its editing domain. The sequence is that of Alanine--tRNA ligase from Aliarcobacter butzleri (strain RM4018) (Arcobacter butzleri).